The following is a 606-amino-acid chain: RUN and FYVE domain-containing protein 2 (606 aa).

Residues 37 to 169 (DSDYPPLQQF…IDANLCVKGE (133 aa)) form the RUN domain. Residues 210–534 (EELNRQLNST…IKEANKALQG (325 aa)) adopt a coiled-coil conformation. Residues 540-598 (DKEATHCKLCEKEFSLSKRKHHCRNCGEIFCNACSDNELPLPSSPKPVRVCDSCHALLI) form an FYVE-type zinc finger. The Zn(2+) site is built by cysteine 546, cysteine 549, cysteine 562, cysteine 565, cysteine 570, cysteine 573, cysteine 590, and cysteine 593.

In terms of assembly, interacts with BMX. As to expression, expressed in brain, lung and testis.

The protein localises to the nucleus. The polypeptide is RUN and FYVE domain-containing protein 2 (RUFY2) (Homo sapiens (Human)).